The primary structure comprises 375 residues: Succinyl-diaminopimelate desuccinylase (375 aa).

Histidine 66 provides a ligand contact to Zn(2+). The active site involves aspartate 68. Aspartate 99 contacts Zn(2+). Glutamate 133 serves as the catalytic Proton acceptor. Residues glutamate 134, glutamate 162, and histidine 348 each contribute to the Zn(2+) site.

The protein belongs to the peptidase M20A family. DapE subfamily. In terms of assembly, homodimer. It depends on Zn(2+) as a cofactor. Requires Co(2+) as cofactor.

It catalyses the reaction N-succinyl-(2S,6S)-2,6-diaminopimelate + H2O = (2S,6S)-2,6-diaminopimelate + succinate. Its pathway is amino-acid biosynthesis; L-lysine biosynthesis via DAP pathway; LL-2,6-diaminopimelate from (S)-tetrahydrodipicolinate (succinylase route): step 3/3. In terms of biological role, catalyzes the hydrolysis of N-succinyl-L,L-diaminopimelic acid (SDAP), forming succinate and LL-2,6-diaminopimelate (DAP), an intermediate involved in the bacterial biosynthesis of lysine and meso-diaminopimelic acid, an essential component of bacterial cell walls. In Teredinibacter turnerae (strain ATCC 39867 / T7901), this protein is Succinyl-diaminopimelate desuccinylase.